Reading from the N-terminus, the 23-residue chain is Acidic phospholipase A2 CTs-A2 (23 aa).

Requires Ca(2+) as cofactor. In terms of processing, contains 7 disulfide bonds. In terms of tissue distribution, expressed by the venom gland.

It localises to the secreted. It catalyses the reaction a 1,2-diacyl-sn-glycero-3-phosphocholine + H2O = a 1-acyl-sn-glycero-3-phosphocholine + a fatty acid + H(+). Functionally, snake venom phospholipase A2 (PLA2) that shows a moderate inhibition of ADP-induced human platelet aggregation when tested on platelet rich plasma. Exhibits moderate hydrolytic activities and prefers the anionic micelles (dPPC with deoxycholate) to the zwitterionic micelles (dPPC with Triton X-100). PLA2 catalyzes the calcium-dependent hydrolysis of the 2-acyl groups in 3-sn-phosphoglycerides. The protein is Acidic phospholipase A2 CTs-A2 of Trimeresurus stejnegeri (Chinese green tree viper).